The chain runs to 492 residues: RNase aCSPSF2 (492 aa).

A divalent metal cation is bound by residues His-130, His-132, Asp-134, His-135, His-213, Asp-234, and His-460.

Belongs to the metallo-beta-lactamase superfamily. RNA-metabolizing metallo-beta-lactamase-like family. Requires Mg(2+) as cofactor.

Its function is as follows. A 5'-3' exoribonuclease, more active on 5'-monophosphorylated and 5'-hydroxylated RNA than 5'-tri-phosphorylated RNA; note there is no evidence for accumulation of 5'-monophosphorylated RNA in this organism. Translation initiation factor 2 subunit gamma but not subunit alpha protects 5'-tri-phosphorylated RNA from degradation by this enzyme. The polypeptide is RNase aCSPSF2 (Saccharolobus solfataricus (strain ATCC 35092 / DSM 1617 / JCM 11322 / P2) (Sulfolobus solfataricus)).